We begin with the raw amino-acid sequence, 1196 residues long: uncharacterized protein (1196 aa).

Residues 27 to 47 traverse the membrane as a helical segment; sequence ILLLLGSFILLNVWINVVTLL. 7 disordered regions span residues 150-345, 367-402, 669-762, 775-806, 826-877, 960-1009, and 1168-1196; these read GGGE…PQAH, SSVPVPTSAPAPPGTLAPATTPVLAPTPAPVPASAP, TQDS…QKNT, CLTQSPGLHKKTPFTQTSDLQRSSGFTQDSGI, QATD…QDSE, YRSS…GPYK, and KCEALSPRRLHQEAPSNSGKPSRSGDIRM. Over residues 157 to 177 the composition is skewed to polar residues; sequence VTASKAQASLLSRPETSSQFP. Low complexity-rich tracts occupy residues 212-227 and 253-279; these read HSPTHTPVCTPTHPWT and THSQAQDTSAQAQAHTSAPTPAQTPAH. Residues 299-321 show a composition bias toward polar residues; sequence HTSAQAQTHSPPHTPEYTHSQAH. The span at 391–402 shows a compositional bias: pro residues; that stretch reads APTPAPVPASAP. 4 stretches are compositionally biased toward polar residues: residues 733–742, 750–762, 787–804, and 826–849; these read YLCQNPSPSQ, SGITQDSHPQKNT, PFTQTSDLQRSSGFTQDS, and QATDHQKNLGSSKDSGGHKNTGNV. Basic and acidic residues predominate over residues 962–971; the sequence is SSEHSQDSNL.

It is found in the membrane. This is an uncharacterized protein from Homo sapiens (Human).